A 300-amino-acid polypeptide reads, in one-letter code: Tyrosine recombinase XerC (300 aa).

One can recognise a Core-binding (CB) domain in the interval 2-87; the sequence is TSLSPLLEKF…SIKSFYKYLV (86 aa). The Tyr recombinase domain maps to 108 to 294; it reads TLPKVLPVEE…TWEQLQQVYD (187 aa). Residues Arg-148, Lys-172, His-246, Arg-249, and His-272 contribute to the active site. Residue Tyr-281 is the O-(3'-phospho-DNA)-tyrosine intermediate of the active site.

It belongs to the 'phage' integrase family. XerC subfamily. Forms a cyclic heterotetrameric complex composed of two molecules of XerC and two molecules of XerD.

It localises to the cytoplasm. Site-specific tyrosine recombinase, which acts by catalyzing the cutting and rejoining of the recombining DNA molecules. The XerC-XerD complex is essential to convert dimers of the bacterial chromosome into monomers to permit their segregation at cell division. It also contributes to the segregational stability of plasmids. The protein is Tyrosine recombinase XerC of Myxococcus xanthus.